We begin with the raw amino-acid sequence, 551 residues long: Calcium-dependent protein kinase 13 (551 aa).

G2 carries N-myristoyl glycine lipidation. Positions 15–78 (SFKQTASQRH…APADLGSVLG (64 aa)) are disordered. Residues 88 to 346 (YAMGRKLGQG…AHEVLCHPWI (259 aa)) enclose the Protein kinase domain. ATP-binding positions include 94 to 102 (LGQGQFGTT) and K117. D212 serves as the catalytic Proton acceptor. An autoinhibitory domain region spans residues 352 to 382 (APDRPLDPAVLSRIKQFSAMNKLKKMALRVI). EF-hand domains are found at residues 389–424 (EEIA…YGST), 425–460 (LKDT…LNKL), 461–496 (EREE…HNMP), and 497–530 (DAFL…GNMG). Ca(2+) is bound by residues D402, D404, S406, E413, D438, D440, S442, T444, E449, D474, D476, S478, Y480, E485, D508, D510, D512, R514, and E519.

This sequence belongs to the protein kinase superfamily. Ser/Thr protein kinase family. CDPK subfamily. Expressed in vascular tissues of crowns and roots, vascular bundles and central cylinder. Expressed in roots, leaf blades, spikelets and developing seeds.

The protein localises to the membrane. It catalyses the reaction L-seryl-[protein] + ATP = O-phospho-L-seryl-[protein] + ADP + H(+). It carries out the reaction L-threonyl-[protein] + ATP = O-phospho-L-threonyl-[protein] + ADP + H(+). Activated by calcium. Autophosphorylation may play an important role in the regulation of the kinase activity. Its function is as follows. May play a role in signal transduction pathways that involve calcium as a second messenger. May function in signal transduction pathways that positively regulate responses to cold, salt and drought stresses. The protein is Calcium-dependent protein kinase 13 of Oryza sativa subsp. japonica (Rice).